Here is a 143-residue protein sequence, read N- to C-terminus: Interleukin-3 (143 aa).

An N-terminal signal peptide occupies residues 1-23 (MSSFPILHLLLLLLGCQVPQAQG). The N-linked (GlcNAc...) asparagine glycan is linked to N79.

The protein belongs to the IL-3 family. As to quaternary structure, monomer.

The protein localises to the secreted. Granulocyte/macrophage colony-stimulating factors are cytokines that act in hematopoiesis by controlling the production, differentiation, and function of 2 related white cell populations of the blood, the granulocytes and the monocytes-macrophages. Functionally, this CSF induces granulocytes, macrophages, mast cells, stem cells, erythroid cells, eosinophils and megakaryocytes. This is Interleukin-3 (IL3) from Canis lupus familiaris (Dog).